Reading from the N-terminus, the 424-residue chain is MDSFKVVLEGPAPWGFRLQGGKDFNVPLSISRLTPGGKAAQAGVAVGDWVLSIDGENAGGLTHIEAQNKIRACGERLSLSLSRAQPAQSKPQKVQTPDKQPLRPLVPDASKQRLMEDTEDWRPRPGTGQSRSFRILAHLTGTEFMQDPDEEHLKKSSQVPRTEAPTPASATPQEPWPGPTTPSPTSRPPWAVDPAFAERYAPDKTSTVLTRHTQPATPTPMQNRTSIVQAAAGGGHGGGGGSNGKTPVCHQCHKVIRGRYLVALGRAYHPEEFVCSQCGKVLEEGGFFEEKGAIFCPPCYDVRYAPSCAKCKKKITGEVMHALKTTWHVHCFTCAACKAPIRNRAFYMEEGAPYCEPDYEKMFGTKCRGCDFKIDAGDRFLEALGFSWHDTCFVCAICQINLEGKTFYSKKDKPLCKSHAFSHV.

The region spanning 1 to 85 (MDSFKVVLEG…RLSLSLSRAQ (85 aa)) is the PDZ domain. Phosphoserine is present on serine 78. Polar residues predominate over residues 81–98 (LSRAQPAQSKPQKVQTPD). The interval 81–221 (LSRAQPAQSK…HTQPATPTPM (141 aa)) is disordered. Threonine 96 is modified (phosphothreonine). Residues 110–123 (SKQRLMEDTEDWRP) show a composition bias toward basic and acidic residues. Positions 174–187 (EPWPGPTTPSPTSR) are enriched in pro residues. Over residues 204–221 (KTSTVLTRHTQPATPTPM) the composition is skewed to polar residues. 3 consecutive LIM zinc-binding domains span residues 247–305 (PVCH…VRYA), 306–365 (PSCA…MFGT), and 366–424 (KCRG…FSHV).

In terms of assembly, binds via its LIM zinc-binding 3 domain (LIM 3) domain to endocytic codes of INSR, but not with those of IGF1R, LDLR, TFRC, or EGFR. Interacts with various PKC isoforms through the LIM zinc-binding domains. Binds to RET in a phosphorylation-independent manner via its LIM zinc-binding 2 domain (LIM 2). Probably part of a complex with SHC and the RET dimer. Interacts with TPM2, TBX4 and TBX5.

The protein localises to the cytoplasm. The protein resides in the cytoskeleton. May function as a scaffold on which the coordinated assembly of proteins can occur. May play a role as an adapter that, via its PDZ domain, localizes LIM-binding proteins to actin filaments of both skeletal muscle and nonmuscle tissues. Involved in both of the two fundamental mechanisms of bone formation, direct bone formation (e.g. embryonic flat bones mandible and cranium), and endochondral bone formation (e.g. embryonic long bone development). Plays a role during fracture repair. Involved in BMP6 signaling pathway. This chain is PDZ and LIM domain protein 7 (PDLIM7), found in Bos taurus (Bovine).